Reading from the N-terminus, the 830-residue chain is Serine/threonine-protein kinase atg1 (830 aa).

The Protein kinase domain maps to 14–307; it reads YVIRSEIGRG…YDGFFSSIVV (294 aa). ATP is bound by residues 20-28 and Lys-43; that span reads IGRGSFAIV. Asp-157 functions as the Proton acceptor in the catalytic mechanism. Ser-346 bears the Phosphoserine mark. Residues 448–468 show a composition bias toward polar residues; that stretch reads TQLSNESLTHEQSINGNSPSP. A disordered region spans residues 448–480; the sequence is TQLSNESLTHEQSINGNSPSPNEGVFQGSFSPE.

It belongs to the protein kinase superfamily. Ser/Thr protein kinase family. APG1/unc-51/ULK1 subfamily. Homodimer. Component of the atg1 kinase complex composed of at least atg1, atg13, atg17 and atg101. Interacts directly with atg13. Phosphorylated. Dephosphorylated under depletion of nitrogen.

The enzyme catalyses L-seryl-[protein] + ATP = O-phospho-L-seryl-[protein] + ADP + H(+). It carries out the reaction L-threonyl-[protein] + ATP = O-phospho-L-threonyl-[protein] + ADP + H(+). Functionally, serine/threonine protein kinase involved in the cytoplasm to vacuole transport (Cvt) and found to be essential in autophagy, where it is required for the formation of autophagosomes. Involved in the clearance of protein aggregates which cannot be efficiently cleared by the proteasome. Required for selective autophagic degradation of the nucleus (nucleophagy) as well as for mitophagy which contributes to regulate mitochondrial quantity and quality by eliminating the mitochondria to a basal level to fulfill cellular energy requirements and preventing excess ROS production. Also involved in endoplasmic reticulum-specific autophagic process, in selective removal of ER-associated degradation (ERAD) substrates. Plays a key role in ATG9 and ATG23 cycling through the pre-autophagosomal structure and is necessary to promote ATG18 binding to ATG9 through phosphorylation of ATG9. Catalyzes phosphorylation of ATG4, decreasing the interaction between ATG4 and ATG8 and impairing deconjugation of PE-conjugated forms of ATG8. Autophagy functions to supply nitrogen and is activated when cells cannot access exogenous nitrogen, thus ensuring that they can adapt and subsequently propagate. Finally, atg13 is also required for glycogen storage during stationary phase and has a role in meiosis and sporulation. The sequence is that of Serine/threonine-protein kinase atg1 from Schizosaccharomyces pombe (strain 972 / ATCC 24843) (Fission yeast).